The chain runs to 94 residues: Evasin P1086 (94 aa).

A signal peptide spans 1–28; it reads MAFNVITFLQLAVFVVILFNINLHSASA. 3 cysteine pairs are disulfide-bonded: Cys-48-Cys-67, Cys-52-Cys-69, and Cys-63-Cys-80. Asn-74 carries N-linked (GlcNAc...) asparagine glycosylation.

The protein localises to the secreted. Functionally, salivary chemokine-binding protein which binds to host chemokines CXCL1, CXCL2, CXCL3, CXCL5, CXCL6, CXCL10, CXCL12 and CXCL13. The protein is Evasin P1086 of Ixodes ricinus (Common tick).